The sequence spans 846 residues: Selenocysteine insertion sequence-binding protein 2 (846 aa).

Composition is skewed to basic and acidic residues over residues 151–165 (RRAWEEQKSSNRRAD) and 206–215 (PEFEFSRLDF). 5 disordered regions span residues 151 to 246 (RRAW…SNMS), 266 to 288 (TDHTDGAVTNNAATSSPSCTREL), 321 to 440 (TTSS…VPVQ), 448 to 467 (AALEKQQHAPHAKPSSRPVV), and 475 to 613 (VLSK…DSAT). A Phosphoserine modification is found at S220. Composition is skewed to polar residues over residues 220–232 (SPKNSNLPETQKQ), 272–288 (AVTNNAATSSPSCTREL), and 321–342 (TTSSADAKNVSVTSEALSSDPS). The short motif at 370–380 (KKNKKKKEKSK) is the Nuclear localization signal element. The span at 417–428 (KLQSKQQAQNDF) shows a compositional bias: polar residues. Positions 527–536 (ILKERQERMQ) are enriched in basic and acidic residues. A compositionally biased stretch (polar residues) spans 542–551 (SAVSPTVASD). The interval 666 to 687 (LVLGLREVLKHLKLRKLKCIII) is RNA-binding. A disordered region spans residues 774–804 (RQEQAGEPGPQTPPSPPMQDPIQSTDEGTLA). Pro residues predominate over residues 783-792 (PQTPPSPPMQ).

In terms of tissue distribution, ubiquitous.

It localises to the cytoplasm. The protein resides in the nucleus. In terms of biological role, mRNA-binding protein that binds to the SECIS (selenocysteine insertion sequence) element present in the 3'-UTR of mRNAs encoding selenoproteins and facilitates the incorporation of the rare amino acid selenocysteine. Insertion of selenocysteine at UGA codons is mediated by SECISBP2 and EEFSEC: SECISBP2 (1) specifically binds the SECIS sequence once the 80S ribosome encounters an in-frame UGA codon and (2) contacts the RPS27A/eS31 of the 40S ribosome before ribosome stalling. (3) GTP-bound EEFSEC then delivers selenocysteinyl-tRNA(Sec) to the 80S ribosome and adopts a preaccommodated state conformation. (4) After GTP hydrolysis, EEFSEC dissociates from the assembly, selenocysteinyl-tRNA(Sec) accommodates, and peptide bond synthesis and selenoprotein elongation occur. The polypeptide is Selenocysteine insertion sequence-binding protein 2 (Secisbp2) (Rattus norvegicus (Rat)).